A 561-amino-acid polypeptide reads, in one-letter code: Zinc finger protein 394 (561 aa).

Residue Ser12 is modified to Phosphoserine. A Glycyl lysine isopeptide (Lys-Gly) (interchain with G-Cter in SUMO2) cross-link involves residue Lys40. The interval Glu43 to Thr62 is disordered. Residues Arg64–Leu146 form the SCAN box domain. The KRAB domain occupies Val155–Pro230. Residues Lys203 and Lys228 each participate in a glycyl lysine isopeptide (Lys-Gly) (interchain with G-Cter in SUMO2) cross-link. Residues Thr238–Ser247 are compositionally biased toward basic and acidic residues. The interval Thr238 to Asn283 is disordered. Lys254 is covalently cross-linked (Glycyl lysine isopeptide (Lys-Gly) (interchain with G-Cter in SUMO2)). Residues Asn265–Gly274 are compositionally biased toward polar residues. Lys282 is covalently cross-linked (Glycyl lysine isopeptide (Lys-Gly) (interchain with G-Cter in SUMO2)). 7 consecutive C2H2-type zinc fingers follow at residues Tyr358–His380, Tyr386–His408, Tyr414–His436, Phe442–His463, Tyr469–His491, Tyr497–His519, and Tyr525–His547. Lys443 is covalently cross-linked (Glycyl lysine isopeptide (Lys-Gly) (interchain with G-Cter in SUMO2)).

The protein belongs to the krueppel C2H2-type zinc-finger protein family.

The protein localises to the nucleus. May be involved in transcriptional regulation. In Pan paniscus (Pygmy chimpanzee), this protein is Zinc finger protein 394 (ZNF394).